Reading from the N-terminus, the 185-residue chain is Small ribosomal subunit protein bS16 (185 aa).

Positions 83 to 185 (QWTHGNNPEK…APASEETTEG (103 aa)) are disordered. Over residues 89–125 (NPEKAKPGKKAQERDAERTQRDADRVAAEAQAKEDAK) the composition is skewed to basic and acidic residues. 2 stretches are compositionally biased toward low complexity: residues 126-146 (AAAA…AAAP) and 159-176 (VEAA…AEEA).

This sequence belongs to the bacterial ribosomal protein bS16 family.

This Caulobacter sp. (strain K31) protein is Small ribosomal subunit protein bS16.